The following is a 157-amino-acid chain: SsrA-binding protein (157 aa).

It belongs to the SmpB family.

The protein resides in the cytoplasm. In terms of biological role, required for rescue of stalled ribosomes mediated by trans-translation. Binds to transfer-messenger RNA (tmRNA), required for stable association of tmRNA with ribosomes. tmRNA and SmpB together mimic tRNA shape, replacing the anticodon stem-loop with SmpB. tmRNA is encoded by the ssrA gene; the 2 termini fold to resemble tRNA(Ala) and it encodes a 'tag peptide', a short internal open reading frame. During trans-translation Ala-aminoacylated tmRNA acts like a tRNA, entering the A-site of stalled ribosomes, displacing the stalled mRNA. The ribosome then switches to translate the ORF on the tmRNA; the nascent peptide is terminated with the 'tag peptide' encoded by the tmRNA and targeted for degradation. The ribosome is freed to recommence translation, which seems to be the essential function of trans-translation. The sequence is that of SsrA-binding protein from Limosilactobacillus fermentum (strain NBRC 3956 / LMG 18251) (Lactobacillus fermentum).